A 456-amino-acid chain; its full sequence is Equilibrative nucleoside transporter 2 (456 aa).

The chain crosses the membrane as a helical span at residues Leu13–Ile33. The N-linked (GlcNAc...) asparagine glycan is linked to Asn56. 5 helical membrane passes run Trp69–Tyr89, Ile98–Val118, Gly123–Leu143, Leu161–Leu181, and Leu192–Leu212. The interval Gly248–Gly277 is disordered. Ser252 carries the post-translational modification Phosphoserine. Positions Asp263–Lys275 are enriched in basic and acidic residues. 5 helical membrane-spanning segments follow: residues Ile288–Ala308, Trp323–Gly343, Leu360–Val380, Phe396–Cys416, and Ala432–Phe452.

Belongs to the SLC29A/ENT transporter (TC 2.A.57) family.

It is found in the apical cell membrane. It localises to the basolateral cell membrane. The protein resides in the nucleus membrane. The enzyme catalyses inosine(in) = inosine(out). It carries out the reaction adenosine(in) = adenosine(out). It catalyses the reaction uridine(out) = uridine(in). The catalysed reaction is thymidine(in) = thymidine(out). The enzyme catalyses hypoxanthine(out) = hypoxanthine(in). It carries out the reaction adenine(out) = adenine(in). It catalyses the reaction cytidine(in) = cytidine(out). The catalysed reaction is thymine(out) = thymine(in). The enzyme catalyses uracil(in) = uracil(out). It carries out the reaction guanine(out) = guanine(in). It catalyses the reaction guanosine(in) = guanosine(out). Its function is as follows. Bidirectional uniporter involved in the facilitative transport of nucleosides and nucleobases, and contributes to maintaining their cellular homeostasis. Functions as a Na(+)-independent, passive transporter. Involved in the transport of nucleosides such as inosine, adenosine, uridine, thymidine, cytidine and guanosine. Also able to transport purine nucleobases (hypoxanthine, adenine, guanine) and pyrimidine nucleobases (thymine, uracil). Involved in nucleoside transport at basolateral membrane of kidney cells, allowing liver absorption of nucleoside metabolites. Mediates apical nucleoside uptake into Sertoli cells, thereby regulating the transport of nucleosides in testis across the blood-testis-barrier. Mediates both the influx and efflux of hypoxanthine in skeletal muscle microvascular endothelial cells to control the amount of intracellular hypoxanthine available for xanthine oxidase-mediated ROS production. The protein is Equilibrative nucleoside transporter 2 of Mus musculus (Mouse).